Consider the following 150-residue polypeptide: Large ribosomal subunit protein bL9 (150 aa).

The protein belongs to the bacterial ribosomal protein bL9 family.

In terms of biological role, binds to the 23S rRNA. The protein is Large ribosomal subunit protein bL9 of Delftia acidovorans (strain DSM 14801 / SPH-1).